An 822-amino-acid polypeptide reads, in one-letter code: MDPECSRLLPALCAVLADPRQLVADDTCLEKLLDWFKTVTEAESSLQLLQDHPCLMELLSHVLKPQDVSPRVLSFALRLVGVFAAQEDCFEYLQQGELLLGLFGESGAPGWAAWSIPSVRSGWIQGLCYLAHHPSALHFLADSGAVDTLFSLQGDPSLFVASAASQLLVHILALSMQGGAPGSPVPEAAAWPMCAQKIVNHVDESLHAKATPQVTQALNVLTTTFGRCHNPWTGVLWERLSPPVARLFERDPIPAVHALMDLLLSVARSPVLNFAACGLWEMLAQTLSRLSPIQAGPLALGTLKLQHCPQELRTQAFGVLLQPLACILKATTQAPGPPGLLDGTVGSLLTVDILLASKSACVGLLCQTLAHLEELQMLPQCPSPWPQVHLLQAALTILHLCDGSADPSSSAGGRLCGTLGGCVRVQRAALDFLGTLSQGTSPLELVLEVFAVLLKTLESPESSPMVLKKAFQATLRWLQNPHKTPSSSDLSSDALLFLGELFPILQKRLCSPCWEVRDSALEFLTHLIRHWGGQADFREALRSSEVPTLALQLLQDPESYVRASAVGAAGQLSSQGLQAAPASPENSQAQQGLLMDLMHILSTDSEGFPRRAVLRVFTDWLRDGHADVVRDTEWFVATVLQAVSRDLDWEVRVQGLELARVFLTQALGQPSLHCPYTVGLPRASSPRPHPEFLQTLCRLPLFEFAFCALLDCDRPVAQKACDLLLFLRDKTVPCSSPREAGDSPNSASVEAALQRWREGEQAQPLGDLDPEAMLAILRALDLEGLQGRLAKSSDHVEKSPQSLLQDMLATVGVLEENEADCY.

Positions 100–200 (LGLFGESGAP…WPMCAQKIVN (101 aa)) are required for interaction with NDFIP1. 2 HEAT repeats span residues 495 to 531 (LLFL…IRHW) and 544 to 576 (SEVP…SSQG). Ser743 carries the phosphoserine modification. The BRAT1-like motif signature appears at 820–822 (DCY). Cys821 lines the Zn(2+) pocket.

Belongs to the BRAT1 family. In terms of assembly, part of the multiprotein complex composed of BRAT1, WDR73, as well as integrator complex subunits INTS9 and INTS11. Interacts with BRCA1 and ATM. Interacts with MTOR and RPTOR. Interacts with NDFIP1. Interacts with SMC1A and PRKDC. Ubiquitinated by NEDD4, NEDD4L and ITCH; mono- and polyubiquitinated forms are detected. As to expression, high levels detected in the cortex and much lower levels detected in the cerebellum, spinal cord and lung (at protein level).

Its subcellular location is the nucleus. The protein localises to the cytoplasm. Its function is as follows. Component of a multiprotein complex required for the assembly of the RNA endonuclease module of the integrator complex. Associates with INTS9 and INTS11 in the cytoplasm and blocks the active site of INTS11 to inhibit the endonuclease activity of INTS11 before formation of the full integrator complex. Following dissociation of WDR73 of the complex, BRAT1 facilitates the nuclear import of the INTS9-INTS11 heterodimer. In the nucleus, INTS4 is integrated to the INTS9-INTS11 heterodimer and BRAT1 is released from the mature RNA endonuclease module by inositol hexakisphosphate (InsP6). BRAT1 is also involved in DNA damage response; activates kinases ATM, SMC1A and PRKDC by modulating their phosphorylation status following ionizing radiation (IR) stress. Plays a role in regulating mitochondrial function and cell proliferation. Required for protein stability of MTOR and MTOR-related proteins, and cell cycle progress by growth factors. This Mus musculus (Mouse) protein is Integrator complex assembly factor BRAT1.